A 598-amino-acid polypeptide reads, in one-letter code: EF-hand and coiled-coil domain-containing protein 1 (598 aa).

A disordered region spans residues 1-22; sequence MEPVSTGAEAGMEGAGGDPYRR. An EF-hand domain is found at 54-89; it reads GLDQYLQEVFHHLDCRGAGRLPRADFRALCAVLGLR. Disordered stretches follow at residues 96-127, 175-198, and 326-411; these read AGQA…DTDE, RLRR…PDCE, and YRSE…KKTP. Residues 175-185 are compositionally biased toward basic residues; that stretch reads RLRRPRRRRRP. Residues 196 to 303 adopt a coiled-coil conformation; that stretch reads DCERVARLEE…RSLHRVRELE (108 aa). A compositionally biased stretch (basic and acidic residues) spans 343 to 359; the sequence is PGDKSNEPEDAGTRDPD. Residues 394–404 are compositionally biased toward acidic residues; it reads SDEEEVEEERW. Residues 479-533 adopt a coiled-coil conformation; the sequence is TSEEEAELQQKVEENEHLRLELQMVETERVRLSLLEEKLVDVLQLLQRLRDLNIS.

The polypeptide is EF-hand and coiled-coil domain-containing protein 1 (EFCC1) (Homo sapiens (Human)).